Consider the following 317-residue polypeptide: MTTALDQLKQYTTVVADTGDFQQLAQYKPQDATTNPSLILKAVQKDAYKPILEKTVRDHRNESTDFIIDRLLIAFGTEILKLIPGRVSTEVDARLSFDTQRSIDKGRELIKLYEAAGIGRERILIKLASTWEGIRAAQVLQQEGIKCNMTLLFSLVQAAACAEAGAQLISPFVGRIYDWYKKQAGADWDEAKDGGANDPGVQSVRRIYTYYKTFGYHTEVMGASFRTTSQIIELAGCDLLTISPDLLQKLQDSNDPVERKLSPDALHDKPTERVAIDEASFRFQLNDDAMATEKLAEGIRVFAADAVKLEKLIAALR.

K126 (schiff-base intermediate with substrate) is an active-site residue.

This sequence belongs to the transaldolase family. Type 1 subfamily. As to quaternary structure, homodimer.

Its subcellular location is the cytoplasm. The catalysed reaction is D-sedoheptulose 7-phosphate + D-glyceraldehyde 3-phosphate = D-erythrose 4-phosphate + beta-D-fructose 6-phosphate. The protein operates within carbohydrate degradation; pentose phosphate pathway; D-glyceraldehyde 3-phosphate and beta-D-fructose 6-phosphate from D-ribose 5-phosphate and D-xylulose 5-phosphate (non-oxidative stage): step 2/3. In terms of biological role, transaldolase is important for the balance of metabolites in the pentose-phosphate pathway. The polypeptide is Transaldolase (Burkholderia vietnamiensis (strain G4 / LMG 22486) (Burkholderia cepacia (strain R1808))).